We begin with the raw amino-acid sequence, 187 residues long: UPF0301 protein VV2869 (187 aa).

Belongs to the UPF0301 (AlgH) family.

This is UPF0301 protein VV2869 from Vibrio vulnificus (strain YJ016).